The following is a 230-amino-acid chain: Methyltransferase aurB (230 aa).

It belongs to the methyltransferase superfamily.

It participates in polyketide biosynthesis. Functionally, methyltransferase; part of the gene cluster that mediates the biosynthesis of aurovertins, fungal polyketides that exhibit potent inhibition of adenosine triphosphate synthase. Tha biosynthesis starts with the HR-PKS aurA that selects propionate as the starter unit; synthesizes a hexa-ene chain through the repeated functions of the KR and DH domains in the first six iterations; selectively introduces three alpha-methyl substitutions at C4, C6, and C16 using the S-adensylmethionine-dependent cMET; and shuts off KR and DH in the last three iterations to afford a 1,3,5-triketo portion that can undergo intramolecular cyclization to yield the alpha-pyrone intermediate. AurE may act as a cyclase and enhances the rate of pyrone formation and product release of aurA. The methyltransferase aurB then methylates the C17 hydroxyl group. C17 methylation is required to initiate epoxidation by the downstream monooxygenase aurC. The monooxygenase aurC and the epoxide hydrolase aurD can iteratively transform the terminal triene portion of the methylated precursor into the dioxabicyclo[3.2.1]octane scaffold of aurovertin E. Epoxidation modifications of the precursor occur in two separate steps; bis-epoxidation of the two terminal olefins takes place first, followed by another epoxidation that occurs at C7-C8 after tetrahydrofuran formation. The O-acyltransferase aurG converts aurovertin E to aurovertin A. In Calcarisporium arbuscula (Dendryphion arbuscula), this protein is Methyltransferase aurB.